We begin with the raw amino-acid sequence, 286 residues long: Phosphatidylglycerol--prolipoprotein diacylglyceryl transferase (286 aa).

7 consecutive transmembrane segments (helical) span residues 24–44 (IGPLAVHWYGVGYIVGILFAW), 72–92 (FIVWAAIGVVLGGRTGYVLFY), 104–124 (IFAVWQGGMSFHGGLLGVILA), 140–160 (FDVVAAGVPVGLGLVRVANFI), 190–210 (LYEALLEGLVLFVVLRILTHS), 218–238 (RFVGGAFICGYGLSRIFVEFF), and 253–273 (WLTMGMILSTPMVLAGIWAMA). R155 serves as a coordination point for a 1,2-diacyl-sn-glycero-3-phospho-(1'-sn-glycerol).

The protein belongs to the Lgt family.

It is found in the cell inner membrane. The catalysed reaction is L-cysteinyl-[prolipoprotein] + a 1,2-diacyl-sn-glycero-3-phospho-(1'-sn-glycerol) = an S-1,2-diacyl-sn-glyceryl-L-cysteinyl-[prolipoprotein] + sn-glycerol 1-phosphate + H(+). It participates in protein modification; lipoprotein biosynthesis (diacylglyceryl transfer). Its function is as follows. Catalyzes the transfer of the diacylglyceryl group from phosphatidylglycerol to the sulfhydryl group of the N-terminal cysteine of a prolipoprotein, the first step in the formation of mature lipoproteins. In Mesorhizobium japonicum (strain LMG 29417 / CECT 9101 / MAFF 303099) (Mesorhizobium loti (strain MAFF 303099)), this protein is Phosphatidylglycerol--prolipoprotein diacylglyceryl transferase.